The chain runs to 533 residues: WUSCHEL-related homeobox 7 (533 aa).

2 disordered regions span residues 1–74 and 125–212; these read MASS…NPRP and SKNK…STQA. Residues 28 to 41 show a composition bias toward low complexity; sequence AGSPPSLLSGSSAG. Residues 59–68 are compositionally biased toward basic and acidic residues; that stretch reads GEERVPDPKP. The segment at residues 65 to 129 is a DNA-binding region (homeobox; WUS-type); the sequence is DPKPRWNPRP…NRKSRSKNKL (65 aa). Residues 132 to 143 show a composition bias toward gly residues; it reads GGTGRAGLGLGG. Residues 161–174 show a composition bias toward pro residues; it reads FTPPPPILPAPQPV. Positions 175-202 are enriched in low complexity; sequence QPQQQLVSPVAAPTSSSSSSSDRSSGSS.

The protein belongs to the WUS homeobox family.

Its subcellular location is the nucleus. Functionally, transcription factor which may be involved in developmental processes. The polypeptide is WUSCHEL-related homeobox 7 (WOX7) (Oryza sativa subsp. japonica (Rice)).